Here is a 471-residue protein sequence, read N- to C-terminus: Cysteine--tRNA ligase (471 aa).

Position 29 (Cys-29) interacts with Zn(2+). A 'HIGH' region motif is present at residues 31-41 (PTVYDYFHIGN). Residues Cys-212, His-237, and Glu-241 each coordinate Zn(2+). A 'KMSKS' region motif is present at residues 269 to 273 (KMSKS). Residue Lys-272 participates in ATP binding.

Belongs to the class-I aminoacyl-tRNA synthetase family. Monomer. Zn(2+) is required as a cofactor.

The protein localises to the cytoplasm. The enzyme catalyses tRNA(Cys) + L-cysteine + ATP = L-cysteinyl-tRNA(Cys) + AMP + diphosphate. The sequence is that of Cysteine--tRNA ligase from Symbiobacterium thermophilum (strain DSM 24528 / JCM 14929 / IAM 14863 / T).